The chain runs to 498 residues: Germ cell-less protein-like 2 (498 aa).

The Nuclear localization signal signature appears at 33–39; the sequence is SRKRKRN. The BTB domain occupies 90-160; that stretch reads SDIKIRALGR…LYTDADLSIT (71 aa).

Interacts with CUL3.

It localises to the nucleus matrix. It participates in protein modification; protein ubiquitination. In terms of biological role, possible function in spermatogenesis. Probable substrate-specific adapter of an E3 ubiquitin-protein ligase complex which mediates the ubiquitination and subsequent proteasomal degradation of target proteins. The protein is Germ cell-less protein-like 2 (Gmcl2) of Mus musculus (Mouse).